The primary structure comprises 298 residues: Protein OS-9 homolog (298 aa).

The signal sequence occupies residues 1–25 (MGLAGGARVVLFVVAAAAAAALTAA). The N-linked (GlcNAc...) asparagine glycan is linked to N95. Residues 121–246 (DQCFYRHEGW…TVQSPMLCKN (126 aa)) form the MRH domain. C123 and C136 are oxidised to a cystine. W130, W131, and Q143 together coordinate a mannooligosaccharide derivative. N-linked (GlcNAc...) asparagine glycosylation is found at N171 and N197. 2 disulfide bridges follow: C201/C232 and C216/C244. Residues D202, R208, E228, and Y234 each coordinate a mannooligosaccharide derivative.

The protein belongs to the OS-9 family. As to quaternary structure, interacts with HRD3.

The protein localises to the endoplasmic reticulum. Its function is as follows. Lectin which functions in endoplasmic reticulum (ER) quality control and ER-associated degradation (ERAD). May bind terminally misfolded non-glycosylated proteins as well as improperly folded glycoproteins, retain them in the ER, and possibly transfer them to the ubiquitination machinery and promote their degradation. The polypeptide is Protein OS-9 homolog (Oryza sativa subsp. japonica (Rice)).